We begin with the raw amino-acid sequence, 715 residues long: Glycine--tRNA ligase beta subunit (715 aa).

Belongs to the class-II aminoacyl-tRNA synthetase family. As to quaternary structure, tetramer of two alpha and two beta subunits.

Its subcellular location is the cytoplasm. It carries out the reaction tRNA(Gly) + glycine + ATP = glycyl-tRNA(Gly) + AMP + diphosphate. The sequence is that of Glycine--tRNA ligase beta subunit from Nitrosomonas eutropha (strain DSM 101675 / C91 / Nm57).